We begin with the raw amino-acid sequence, 411 residues long: KIN17-like protein (411 aa).

The C2H2-type zinc finger occupies 28–50; that stretch reads CQMCQKQCRDENGFKCHCMSESH. Positions 51–160 are winged helix-turn-helix (wHTH); sequence QRQMQVFGQN…KERLKNKRVK (110 aa). A coiled-coil region spans residues 147–183; it reads ETLFKERLKNKRVKSDLAEEEKQEREIQRQIERAAEK. Disordered regions lie at residues 182–211 and 232–286; these read EKLNGGGGEGETSGNDEVVDDGDDERKKDE and VATG…EEEK. Over residues 253–286 the composition is skewed to basic and acidic residues; sequence KVERGEKRKRSGDSGRSEKERRSALDELMKEEEK. Positions 259-262 match the Nuclear localization signal (NLS) motif; the sequence is KRKR. Residues 265–294 are a coiled coil; the sequence is DSGRSEKERRSALDELMKEEEKKKERMNRK. The C-terminal subdomain A stretch occupies residues 301–352; it reads GIIVKVMSKALAEKGYYKQKGVVKKVIDNYVGEIKMLDSKHVLRVDQKELET. The segment at 358 to 409 is C-terminal subdomain B; the sequence is GGMVKIVNGAYRGSNARLLGVDTEKFCAKVQIEKGVYDGRVIKSIEYEDICK.

This sequence belongs to the KIN17 family. In terms of assembly, interacts with SPL7. In terms of tissue distribution, expressed in root vasculature, lateral roots, cotyledons, rosette leaves, cauline leaves, stems, sepals, style of pistils, mature pollen grains and siliques.

It localises to the nucleus speckle. In terms of biological role, promotes the copper deficiency response by direct interaction with SPL7. Acts with SPL7 in a common pathway to promote copper-responsive genes and alleviate oxidative stress during copper-limiting periods. May promote SPL7 function when copper is limiting. Participates in the control of general plant growth and development, and in the response to counteract the negative effects of UV radiation. In Arabidopsis thaliana (Mouse-ear cress), this protein is KIN17-like protein.